The sequence spans 420 residues: ATP phosphoribosyltransferase regulatory subunit (420 aa).

Belongs to the class-II aminoacyl-tRNA synthetase family. HisZ subfamily. As to quaternary structure, heteromultimer composed of HisG and HisZ subunits.

It is found in the cytoplasm. It participates in amino-acid biosynthesis; L-histidine biosynthesis; L-histidine from 5-phospho-alpha-D-ribose 1-diphosphate: step 1/9. In terms of biological role, required for the first step of histidine biosynthesis. May allow the feedback regulation of ATP phosphoribosyltransferase activity by histidine. The protein is ATP phosphoribosyltransferase regulatory subunit of Bacillus anthracis (strain A0248).